Reading from the N-terminus, the 343-residue chain is Uroporphyrinogen decarboxylase (343 aa).

Substrate-binding positions include 23–27 (RQAGR), Asp-73, Tyr-151, Ser-206, and His-322.

The protein belongs to the uroporphyrinogen decarboxylase family. Homodimer.

It is found in the cytoplasm. The catalysed reaction is uroporphyrinogen III + 4 H(+) = coproporphyrinogen III + 4 CO2. It participates in porphyrin-containing compound metabolism; protoporphyrin-IX biosynthesis; coproporphyrinogen-III from 5-aminolevulinate: step 4/4. Catalyzes the decarboxylation of four acetate groups of uroporphyrinogen-III to yield coproporphyrinogen-III. In Granulibacter bethesdensis (strain ATCC BAA-1260 / CGDNIH1), this protein is Uroporphyrinogen decarboxylase.